Consider the following 428-residue polypeptide: Enolase (428 aa).

Q163 lines the (2R)-2-phosphoglycerate pocket. Residue E205 is the Proton donor of the active site. Mg(2+) contacts are provided by D242, E286, and D313. The (2R)-2-phosphoglycerate site is built by K338, R367, S368, and K389. K338 acts as the Proton acceptor in catalysis.

This sequence belongs to the enolase family. The cofactor is Mg(2+).

The protein localises to the cytoplasm. Its subcellular location is the secreted. It is found in the cell surface. It carries out the reaction (2R)-2-phosphoglycerate = phosphoenolpyruvate + H2O. Its pathway is carbohydrate degradation; glycolysis; pyruvate from D-glyceraldehyde 3-phosphate: step 4/5. Catalyzes the reversible conversion of 2-phosphoglycerate (2-PG) into phosphoenolpyruvate (PEP). It is essential for the degradation of carbohydrates via glycolysis. This Lactobacillus helveticus (strain DPC 4571) protein is Enolase.